Reading from the N-terminus, the 311-residue chain is 4-hydroxy-3-methylbut-2-enyl diphosphate reductase (311 aa).

Cys12 lines the [4Fe-4S] cluster pocket. 2 residues coordinate (2E)-4-hydroxy-3-methylbut-2-enyl diphosphate: His41 and His74. Dimethylallyl diphosphate is bound by residues His41 and His74. Residues His41 and His74 each contribute to the isopentenyl diphosphate site. [4Fe-4S] cluster is bound at residue Cys96. His124 lines the (2E)-4-hydroxy-3-methylbut-2-enyl diphosphate pocket. His124 serves as a coordination point for dimethylallyl diphosphate. Position 124 (His124) interacts with isopentenyl diphosphate. The Proton donor role is filled by Glu126. Thr168 contributes to the (2E)-4-hydroxy-3-methylbut-2-enyl diphosphate binding site. Position 198 (Cys198) interacts with [4Fe-4S] cluster. 4 residues coordinate (2E)-4-hydroxy-3-methylbut-2-enyl diphosphate: Ser226, Ser227, Asn228, and Ser270. Dimethylallyl diphosphate contacts are provided by Ser226, Ser227, Asn228, and Ser270. Isopentenyl diphosphate-binding residues include Ser226, Ser227, Asn228, and Ser270.

It belongs to the IspH family. It depends on [4Fe-4S] cluster as a cofactor.

The enzyme catalyses isopentenyl diphosphate + 2 oxidized [2Fe-2S]-[ferredoxin] + H2O = (2E)-4-hydroxy-3-methylbut-2-enyl diphosphate + 2 reduced [2Fe-2S]-[ferredoxin] + 2 H(+). The catalysed reaction is dimethylallyl diphosphate + 2 oxidized [2Fe-2S]-[ferredoxin] + H2O = (2E)-4-hydroxy-3-methylbut-2-enyl diphosphate + 2 reduced [2Fe-2S]-[ferredoxin] + 2 H(+). Its pathway is isoprenoid biosynthesis; dimethylallyl diphosphate biosynthesis; dimethylallyl diphosphate from (2E)-4-hydroxy-3-methylbutenyl diphosphate: step 1/1. The protein operates within isoprenoid biosynthesis; isopentenyl diphosphate biosynthesis via DXP pathway; isopentenyl diphosphate from 1-deoxy-D-xylulose 5-phosphate: step 6/6. Functionally, catalyzes the conversion of 1-hydroxy-2-methyl-2-(E)-butenyl 4-diphosphate (HMBPP) into a mixture of isopentenyl diphosphate (IPP) and dimethylallyl diphosphate (DMAPP). Acts in the terminal step of the DOXP/MEP pathway for isoprenoid precursor biosynthesis. The protein is 4-hydroxy-3-methylbut-2-enyl diphosphate reductase of Saccharophagus degradans (strain 2-40 / ATCC 43961 / DSM 17024).